The primary structure comprises 812 residues: Valine--tRNA ligase (812 aa).

A 'HIGH' region motif is present at residues Pro-46–His-56. Residues Lys-536–Ser-540 carry the 'KMSKS' region motif. Residue Lys-539 participates in ATP binding.

The protein belongs to the class-I aminoacyl-tRNA synthetase family. ValS type 2 subfamily. As to quaternary structure, monomer.

Its subcellular location is the cytoplasm. It catalyses the reaction tRNA(Val) + L-valine + ATP = L-valyl-tRNA(Val) + AMP + diphosphate. Catalyzes the attachment of valine to tRNA(Val). As ValRS can inadvertently accommodate and process structurally similar amino acids such as threonine, to avoid such errors, it has a 'posttransfer' editing activity that hydrolyzes mischarged Thr-tRNA(Val) in a tRNA-dependent manner. The chain is Valine--tRNA ligase from Rickettsia bellii (strain OSU 85-389).